A 472-amino-acid polypeptide reads, in one-letter code: Aspartyl/glutamyl-tRNA(Asn/Gln) amidotransferase subunit B (472 aa).

Belongs to the GatB/GatE family. GatB subfamily. Heterotrimer of A, B and C subunits.

It carries out the reaction L-glutamyl-tRNA(Gln) + L-glutamine + ATP + H2O = L-glutaminyl-tRNA(Gln) + L-glutamate + ADP + phosphate + H(+). The catalysed reaction is L-aspartyl-tRNA(Asn) + L-glutamine + ATP + H2O = L-asparaginyl-tRNA(Asn) + L-glutamate + ADP + phosphate + 2 H(+). Functionally, allows the formation of correctly charged Asn-tRNA(Asn) or Gln-tRNA(Gln) through the transamidation of misacylated Asp-tRNA(Asn) or Glu-tRNA(Gln) in organisms which lack either or both of asparaginyl-tRNA or glutaminyl-tRNA synthetases. The reaction takes place in the presence of glutamine and ATP through an activated phospho-Asp-tRNA(Asn) or phospho-Glu-tRNA(Gln). The protein is Aspartyl/glutamyl-tRNA(Asn/Gln) amidotransferase subunit B of Elusimicrobium minutum (strain Pei191).